A 184-amino-acid chain; its full sequence is Photosystem I assembly protein Ycf4 (184 aa).

2 helical membrane-spanning segments follow: residues 22–42 (LCWA…GTSS) and 57–77 (ILFF…LFIS).

This sequence belongs to the Ycf4 family.

It localises to the plastid. The protein resides in the chloroplast thylakoid membrane. Its function is as follows. Seems to be required for the assembly of the photosystem I complex. The polypeptide is Photosystem I assembly protein Ycf4 (Daucus carota (Wild carrot)).